We begin with the raw amino-acid sequence, 627 residues long: 2-oxoacid:ferredoxin oxidoreductase 1, subunit alpha (627 aa).

Positions 253-257 (YPITP) match the YPITP motif motif. Substrate is bound by residues threonine 256 and arginine 344.

In terms of assembly, heterodimer composed of an alpha and a beta subunit.

The enzyme catalyses a 2-oxocarboxylate + 2 oxidized [2Fe-2S]-[ferredoxin] + CoA = an acyl-CoA + 2 reduced [2Fe-2S]-[ferredoxin] + CO2 + H(+). Its activity is regulated as follows. Inhibited by low concentration of 4-fluoro-7-nitrobenzofurazan (NBD-F). Catalyzes the coenzyme A-dependent oxidative decarboxylation of different 2-oxoacids such as 2-oxoglutarate, pyruvate and 2-oxobutyrate to form their CoA derivatives. This is 2-oxoacid:ferredoxin oxidoreductase 1, subunit alpha from Sulfurisphaera tokodaii (strain DSM 16993 / JCM 10545 / NBRC 100140 / 7) (Sulfolobus tokodaii).